The primary structure comprises 460 residues: MCKIYLMAKSFLKDVLLGFSSLCDRTAAPLRLLLAVSGGADSMAMLSAFLELKSDINAEIFVLTVNHNIRPEKETLGDAQFVLDFCNDKCPCILAEIPKNTVFDEAKNRKTGIEDAARFLRYNEFEKAADSLNADYILTAHNKNDNYETVLMRLFQGSEPEALMGISPRRGRFIRPMLNISRSEIEEYLKEKNIPWREDATNLEASYLRNKVRHNLLPVLSICFDGWQSGLDKSLAKIKAQNDFVIASYKTKKEEWVLDKKEDCCRCKFLFFLSLDEALKLKFLQEGLILLKGKRRIPYSVFDDLMKLSDTKKIIFSGGFCIKKEGDEVLLFKAVTEEKTSEVFYSIWIDKPCSFDTPAGNFKALENDDGFFIVHESDKTCGIGPFKPPFCVRSRLFGDEIETSSGSKKSVKKIINEWNIDYENRNILPIIEEGGVVKGIYGAVFGKKNWYVVGDLGVKR.

An ATP-binding site is contributed by 37-42 (SGGADS).

This sequence belongs to the tRNA(Ile)-lysidine synthase family.

It localises to the cytoplasm. The catalysed reaction is cytidine(34) in tRNA(Ile2) + L-lysine + ATP = lysidine(34) in tRNA(Ile2) + AMP + diphosphate + H(+). Ligates lysine onto the cytidine present at position 34 of the AUA codon-specific tRNA(Ile) that contains the anticodon CAU, in an ATP-dependent manner. Cytidine is converted to lysidine, thus changing the amino acid specificity of the tRNA from methionine to isoleucine. The protein is tRNA(Ile)-lysidine synthase of Treponema denticola (strain ATCC 35405 / DSM 14222 / CIP 103919 / JCM 8153 / KCTC 15104).